The chain runs to 191 residues: MMTGNLNGGGRGGEGPCGACKFLRRKCVKGCVFAPYFDAEQGTARFAAVHKVFGASNASKMLLRLPLHKRLDAVVTLCYEAMARIRDPVYGSVGHLFSLQHQVMNLQAELAHVQARLSTIQRFPLQSPQQMQPPSFDPAHNNEYAMEPSNLDSVWGEEHLLQDGTGDGDFQELASQFVSRYLPAVKLPACT.

The region spanning 15–117 (GPCGACKFLR…AELAHVQARL (103 aa)) is the LOB domain.

It belongs to the LOB domain-containing protein family. In terms of tissue distribution, expressed in shoots, roots and floral tissues, but not in stems or leaves.

The chain is LOB domain-containing protein 19 (LBD19) from Arabidopsis thaliana (Mouse-ear cress).